The chain runs to 401 residues: Argininosuccinate synthase (401 aa).

8–16 contacts ATP; the sequence is AYSGGLDTT. Tyrosine 87 contacts L-citrulline. Residue glycine 117 coordinates ATP. Positions 119, 123, and 124 each coordinate L-aspartate. Residue asparagine 123 participates in L-citrulline binding. 4 residues coordinate L-citrulline: arginine 127, serine 175, glutamate 259, and tyrosine 271.

Belongs to the argininosuccinate synthase family. Type 1 subfamily. In terms of assembly, homotetramer.

The protein localises to the cytoplasm. It catalyses the reaction L-citrulline + L-aspartate + ATP = 2-(N(omega)-L-arginino)succinate + AMP + diphosphate + H(+). It participates in amino-acid biosynthesis; L-arginine biosynthesis; L-arginine from L-ornithine and carbamoyl phosphate: step 2/3. The sequence is that of Argininosuccinate synthase from Corynebacterium glutamicum (strain ATCC 13032 / DSM 20300 / JCM 1318 / BCRC 11384 / CCUG 27702 / LMG 3730 / NBRC 12168 / NCIMB 10025 / NRRL B-2784 / 534).